The primary structure comprises 175 residues: Co-chaperone protein HscB homolog (175 aa).

Residues 8 to 80 (DFFSLFGLPR…LNRARYLLQL (73 aa)) form the J domain.

It belongs to the HscB family. As to quaternary structure, interacts with HscA and stimulates its ATPase activity.

Co-chaperone involved in the maturation of iron-sulfur cluster-containing proteins. Seems to help targeting proteins to be folded toward HscA. This Chromobacterium violaceum (strain ATCC 12472 / DSM 30191 / JCM 1249 / CCUG 213 / NBRC 12614 / NCIMB 9131 / NCTC 9757 / MK) protein is Co-chaperone protein HscB homolog.